We begin with the raw amino-acid sequence, 486 residues long: Iron-sulfur cluster assembly SufBD family protein ycf24 (486 aa).

It belongs to the iron-sulfur cluster assembly SufBD family.

The protein localises to the plastid. Its subcellular location is the chloroplast. In Trieres chinensis (Marine centric diatom), this protein is Iron-sulfur cluster assembly SufBD family protein ycf24 (ycf24).